The following is a 556-amino-acid chain: Membrane protein insertase YidC (556 aa).

Residues 5–25 form a helical membrane-spanning segment; sequence TLTAIVLSFVLLTAFQFYMAW. Residues 36–74 form a disordered region; sequence QVQSGESSAPAPLASTAPVADALPPPVEGMAGSAPQQAM. Over residues 42 to 55 the composition is skewed to low complexity; it reads SSAPAPLASTAPVA. 4 helical membrane-spanning segments follow: residues 370–390, 441–461, 468–488, and 510–530; these read NYGV…FPLA, LPIL…FLSV, FMLW…PLLM, and IMMF…SGLV.

It belongs to the OXA1/ALB3/YidC family. Type 1 subfamily. As to quaternary structure, interacts with the Sec translocase complex via SecD. Specifically interacts with transmembrane segments of nascent integral membrane proteins during membrane integration.

Its subcellular location is the cell inner membrane. Required for the insertion and/or proper folding and/or complex formation of integral membrane proteins into the membrane. Involved in integration of membrane proteins that insert both dependently and independently of the Sec translocase complex, as well as at least some lipoproteins. Aids folding of multispanning membrane proteins. The protein is Membrane protein insertase YidC of Magnetococcus marinus (strain ATCC BAA-1437 / JCM 17883 / MC-1).